A 1233-amino-acid chain; its full sequence is Hemocyanin A-type, units Ode to Odg (1233 aa).

An ODD region spans residues 1–4; it reads EGNE. Positions 5–422 are ODE; sequence YLVRKNVERL…KQDADIDIPL (418 aa). His-45 serves as a coordination point for Cu cation. Cysteines 51 and 62 form a disulfide. The 2'-(S-cysteinyl)-histidine (Cys-His) cross-link spans 63 to 65; it reads CLH. His-65, His-74, His-186, His-190, and His-217 together coordinate Cu cation. Intrachain disulfides connect Cys-176/Cys-243 and Cys-334/Cys-340. Residue Asn-392 is glycosylated (N-linked (GlcNAc...) asparagine). The interval 423-839 is ODF; the sequence is NHIRRNVESL…KEIEKEAVRG (417 aa). A Cu cation-binding site is contributed by His-463. Cys-468 and Cys-478 are disulfide-bonded. Residues 479–481 constitute a cross-link (2'-(S-cysteinyl)-histidine (Cys-His)); the sequence is CLH. The Cu cation site is built by His-481 and His-490. N-linked (GlcNAc...) asparagine glycosylation occurs at Asn-538. Cystine bridges form between Cys-589/Cys-656 and Cys-743/Cys-748. Residues His-599, His-603, and His-630 each contribute to the Cu cation site. The segment at 840–1233 is ODG; that stretch reads TIIRKNVNSL…VFLAPAKTTH (394 aa). His-880 provides a ligand contact to Cu cation. Cys-886 and Cys-896 are disulfide-bonded. N-linked (GlcNAc...) asparagine glycosylation is present at Asn-890. The segment at residues 897-899 is a cross-link (2'-(S-cysteinyl)-histidine (Cys-His)); sequence CQH. 5 residues coordinate Cu cation: His-899, His-908, His-1008, His-1012, and His-1039. Intrachain disulfides connect Cys-998–Cys-1065 and Cys-1152–Cys-1158.

Belongs to the tyrosinase family. Hemocyanin subfamily. Decamers of large identical subunits (350 kDa), each containing 7 globular oxygen-binding domains: ODA, ODB, ODC, ODD, ODE, ODF, and ODG. It depends on Cu(2+) as a cofactor.

Functionally, hemocyanins are copper-containing oxygen carriers occurring freely dissolved in the hemolymph of many mollusks and arthropods. This is Hemocyanin A-type, units Ode to Odg from Enteroctopus dofleini (North Pacific giant octopus).